The following is a 138-amino-acid chain: HHSKHHAAYVKGVNDAVAKLEEARAKDDHSAIFLNEKNLAFHLGGHVNHSIWWKNLSPNGGDKPTGDLASAIDDAFGSFDKFRAQFSAAANGLQGSGWAVLGYDSLGDKLLTFQLYDQQANVPLGIIPLLQVDMWEHA.

Residues His-1, His-49, Asp-133, and His-137 each coordinate Mn(2+).

Belongs to the iron/manganese superoxide dismutase family. The cofactor is Mn(2+).

It carries out the reaction 2 superoxide + 2 H(+) = H2O2 + O2. Its function is as follows. Destroys superoxide anion radicals which are normally produced within the cells and which are toxic to biological systems. The sequence is that of Superoxide dismutase [Mn] (sodA) from Mycobacterium malmoense.